The following is a 161-amino-acid chain: DNA-binding protein inhibitor ID-4 (161 aa).

The region spanning alanine 52–leucine 104 is the bHLH domain. The tract at residues arginine 116–arginine 161 is disordered. The segment covering glutamine 117 to histidine 126 has biased composition (pro residues).

In terms of assembly, heterodimer with other HLH proteins.

The protein resides in the nucleus. Its function is as follows. Transcriptional regulator (lacking a basic DNA binding domain) which negatively regulates the basic helix-loop-helix (bHLH) transcription factors by forming heterodimers and inhibiting their DNA binding and transcriptional activity. Implicated in regulating a variety of cellular processes, including cellular growth, senescence, differentiation, apoptosis, angiogenesis, and neoplastic transformation. This is DNA-binding protein inhibitor ID-4 (ID4) from Sus scrofa (Pig).